The chain runs to 350 residues: Zona pellucida-binding protein 1 (350 aa).

The signal sequence occupies residues 1-38; that stretch reads MEASAPDRARRGWRRARAAASPLSRAAVVLLLSALVLR. N-linked (GlcNAc...) asparagine glycans are attached at residues asparagine 113, asparagine 186, and asparagine 339.

The protein belongs to the zona pellucida-binding protein Sp38 family. In terms of processing, N-glycosylated. As to expression, expressed in testis. Detected in sperm cells.

Its subcellular location is the cytoplasmic vesicle. The protein resides in the secretory vesicle. It is found in the acrosome. It localises to the secreted. The protein localises to the acrosome membrane. Plays a role in acrosome compaction and sperm morphogenesis. Is implicated in sperm-oocyte interaction during fertilization. The polypeptide is Zona pellucida-binding protein 1 (ZPBP) (Sus scrofa (Pig)).